We begin with the raw amino-acid sequence, 145 residues long: LIM domain only protein 3 (145 aa).

LIM zinc-binding domains lie at 11–73 (KGCA…LFGT) and 75–137 (GNCA…GLMK).

The chain is LIM domain only protein 3 (Lmo3) from Rattus norvegicus (Rat).